The sequence spans 266 residues: Norfluorocurarine synthase 1 (266 aa).

The region spanning 11-121 is the AB hydrolase-1 domain; that stretch reads HFVLVHGAGH…VMPDAVHPPS (111 aa). Catalysis depends on residues S86, D216, and H244.

The protein belongs to the AB hydrolase superfamily. As to quaternary structure, homodimer. In terms of tissue distribution, mainly expressed in roots.

The enzyme catalyses 17-dehydropreakuammicine + H2O = norfluorocurarine + methanol + CO2. The protein operates within alkaloid biosynthesis. In terms of biological role, hydrolase involved in the biosynthesis of curare monoterpene indole alkaloids (MIAs), natural products such as strychnine, a neurotoxic compound used as a pesticide to control rodents, and its pharmacologically active derivatives, including brucine, used to regulate blood pressure. Curare alkaloids act as animal glycine receptor antagonists. Catalyzes the conversion of dehydropreakuammicine to norfluorocurarine. This is Norfluorocurarine synthase 1 from Strychnos nux-vomica (Poison nut).